Here is a 132-residue protein sequence, read N- to C-terminus: Histone H2A (132 aa).

Residues 1–13 (MSAKGKTGRKKAS) show a composition bias toward basic residues. The disordered stretch occupies residues 1 to 21 (MSAKGKTGRKKASKGTSNSAK).

It belongs to the histone H2A family. The nucleosome is a histone octamer containing two molecules each of H2A, H2B, H3 and H4 assembled in one H3-H4 heterotetramer and two H2A-H2B heterodimers. The octamer wraps approximately 147 bp of DNA.

The protein localises to the nucleus. The protein resides in the chromosome. Core component of nucleosome. Nucleosomes wrap and compact DNA into chromatin, limiting DNA accessibility to the cellular machineries which require DNA as a template. Histones thereby play a central role in transcription regulation, DNA repair, DNA replication and chromosomal stability. DNA accessibility is regulated via a complex set of post-translational modifications of histones, also called histone code, and nucleosome remodeling. This chain is Histone H2A, found in Plasmodium falciparum.